A 353-amino-acid polypeptide reads, in one-letter code: DNA polymerase IV (353 aa).

The UmuC domain occupies 6 to 187 (IIHIDCDCFY…LPVTKLHGVG (182 aa)). Residues aspartate 10 and aspartate 105 each contribute to the Mg(2+) site. The active site involves glutamate 106.

The protein belongs to the DNA polymerase type-Y family. In terms of assembly, monomer. Mg(2+) serves as cofactor.

The protein localises to the cytoplasm. It catalyses the reaction DNA(n) + a 2'-deoxyribonucleoside 5'-triphosphate = DNA(n+1) + diphosphate. Functionally, poorly processive, error-prone DNA polymerase involved in untargeted mutagenesis. Copies undamaged DNA at stalled replication forks, which arise in vivo from mismatched or misaligned primer ends. These misaligned primers can be extended by PolIV. Exhibits no 3'-5' exonuclease (proofreading) activity. May be involved in translesional synthesis, in conjunction with the beta clamp from PolIII. The chain is DNA polymerase IV from Pseudomonas savastanoi pv. phaseolicola (strain 1448A / Race 6) (Pseudomonas syringae pv. phaseolicola (strain 1448A / Race 6)).